A 340-amino-acid polypeptide reads, in one-letter code: Glyceraldehyde-3-phosphate dehydrogenase (340 aa).

Residues 11-12 and Gly109 contribute to the NAD(+) site; that span reads TI. 138 to 140 provides a ligand contact to D-glyceraldehyde 3-phosphate; sequence SCN. The active-site Nucleophile is the Cys139. Arg167 is an NAD(+) binding site. A D-glyceraldehyde 3-phosphate-binding site is contributed by 193–194; it reads HA. Gln300 contacts NAD(+).

The protein belongs to the glyceraldehyde-3-phosphate dehydrogenase family. In terms of assembly, homotetramer.

It is found in the cytoplasm. The enzyme catalyses D-glyceraldehyde 3-phosphate + phosphate + NADP(+) = (2R)-3-phospho-glyceroyl phosphate + NADPH + H(+). It catalyses the reaction D-glyceraldehyde 3-phosphate + phosphate + NAD(+) = (2R)-3-phospho-glyceroyl phosphate + NADH + H(+). Its pathway is carbohydrate degradation; glycolysis; pyruvate from D-glyceraldehyde 3-phosphate: step 1/5. In Saccharolobus islandicus (strain L.S.2.15 / Lassen #1) (Sulfolobus islandicus), this protein is Glyceraldehyde-3-phosphate dehydrogenase.